The following is a 269-amino-acid chain: 1-(5-phosphoribosyl)-5-[(5-phosphoribosylamino)methylideneamino] imidazole-4-carboxamide isomerase (269 aa).

The Proton acceptor role is filled by Asp10. Catalysis depends on Asp132, which acts as the Proton donor.

Belongs to the HisA/HisF family.

The protein resides in the cytoplasm. The catalysed reaction is 1-(5-phospho-beta-D-ribosyl)-5-[(5-phospho-beta-D-ribosylamino)methylideneamino]imidazole-4-carboxamide = 5-[(5-phospho-1-deoxy-D-ribulos-1-ylimino)methylamino]-1-(5-phospho-beta-D-ribosyl)imidazole-4-carboxamide. It participates in amino-acid biosynthesis; L-histidine biosynthesis; L-histidine from 5-phospho-alpha-D-ribose 1-diphosphate: step 4/9. The sequence is that of 1-(5-phosphoribosyl)-5-[(5-phosphoribosylamino)methylideneamino] imidazole-4-carboxamide isomerase from Xylella fastidiosa (strain M12).